We begin with the raw amino-acid sequence, 390 residues long: ATP-sensitive inward rectifier potassium channel 11 (390 aa).

Residues 1–65 (MLSRKGIIPE…LQDVFTTLVD (65 aa)) are Cytoplasmic-facing. 2 residues coordinate ATP: Asn-48 and Arg-50. The chain crosses the membrane as a helical span at residues 66–92 (LKWPHTLLIFTMSFLCSWLLFAMVWWL). The Extracellular portion of the chain corresponds to 93 to 116 (IAFAHGDLAPGEGTTVPCVTSIHS). Cys-110 and Cys-142 are joined by a disulfide. An intramembrane region (discontinuously helical; Pore-forming) is located at residues 117–133 (FSSAFLFSIEVQVTIGF). K(+)-binding residues include Thr-130 and Phe-133. The Selectivity filter signature appears at 130–135 (TIGFGG). Over 134 to 142 (GGRMVTEEC) the chain is Extracellular. The chain crosses the membrane as a helical span at residues 143 to 171 (PLAILILIVQNIVGLMINAIMLGCIFMKT). At 172–390 (SQAHRRAETL…RFSISPDSLS (219 aa)) the chain is on the cytoplasmic side. Arg-176 lines the a 1,2-diacyl-sn-glycero-3-phospho-(1D-myo-inositol-4,5-bisphosphate) pocket. Tyr-330 contacts ATP. Thr-341 is subject to Phosphothreonine; by MAPK1. A Phosphoserine; by MAPK1 modification is found at Ser-385.

The protein belongs to the inward rectifier-type potassium channel (TC 1.A.2.1) family. KCNJ11 subfamily. In terms of assembly, homotetramer; the homotetramer binds four ATP molecules (one ATP per subunit). Forms an heterooctamer with ABCC8/SUR1; one KCNJ11 homotetramer interacts with four ABCC8/SUR1 molecules. Interacts with ABCC9/SUR2. Post-translationally, phosphorylation by MAPK1 results in changes in channel gating that destabilize the closed states and reduce the ATP sensitivity.

It localises to the membrane. The enzyme catalyses K(+)(in) = K(+)(out). KATP channels are regulated by cytoplasmic ATP/ADP ratios; ATP inhibits the channel by closing the pore, while ADP activates the channel. Activated by phosphatidylinositol 4,5-biphosphate (PtdIns(4,5)P2). Its function is as follows. Inward rectifier potassium channel that forms the pore of ATP-sensitive potassium channels (KATP), regulating potassium permeability as a function of cytoplasmic ATP and ADP concentrations in many different cells. Inward rectifier potassium channels are characterized by a greater tendency to allow potassium to flow into the cell rather than out of it. Their voltage dependence is regulated by the concentration of extracellular potassium; as external potassium is raised, the voltage range of the channel opening shifts to more positive voltages. The inward rectification is mainly due to the blockage of outward current by internal magnesium. Can be blocked by extracellular barium. In pancreatic cells, it forms KATP channels with ABCC8/SUR1. Can form cardiac and smooth muscle-type KATP channels with ABCC9. The chain is ATP-sensitive inward rectifier potassium channel 11 (KCNJ11) from Cavia porcellus (Guinea pig).